The following is a 361-amino-acid chain: Serpentine receptor class epsilon-32 (361 aa).

7 helical membrane-spanning segments follow: residues 34–54 (IIEL…LYVM), 66–86 (ILYI…LITI), 124–144 (LLIF…YGIL), 168–188 (IPIA…LSVL), 195–215 (FLSH…YLFI), 256–276 (LVFV…ALAF), and 286–306 (FVEN…MLTI).

This sequence belongs to the nematode receptor-like protein sre family.

It localises to the membrane. This is Serpentine receptor class epsilon-32 (sre-32) from Caenorhabditis elegans.